Reading from the N-terminus, the 355-residue chain is Heat-inducible transcription repressor HrcA (355 aa).

It belongs to the HrcA family.

In terms of biological role, negative regulator of class I heat shock genes (grpE-dnaK-dnaJ and groELS operons). Prevents heat-shock induction of these operons. The protein is Heat-inducible transcription repressor HrcA of Nitratidesulfovibrio vulgaris (strain DP4) (Desulfovibrio vulgaris).